A 520-amino-acid polypeptide reads, in one-letter code: GMP synthase [glutamine-hydrolyzing] (520 aa).

The Glutamine amidotransferase type-1 domain occupies 9–202 (HVLIVDFGSQ…THKIAGLKGD (194 aa)). Cys86 serves as the catalytic Nucleophile. Residues His176 and Glu178 contribute to the active site. In terms of domain architecture, GMPS ATP-PPase spans 203 to 395 (WTMKAFREEA…LGLPPQFVGR (193 aa)). ATP is bound at residue 230-236 (SGGVDSS).

Homodimer.

It catalyses the reaction XMP + L-glutamine + ATP + H2O = GMP + L-glutamate + AMP + diphosphate + 2 H(+). The protein operates within purine metabolism; GMP biosynthesis; GMP from XMP (L-Gln route): step 1/1. Functionally, catalyzes the synthesis of GMP from XMP. The polypeptide is GMP synthase [glutamine-hydrolyzing] (Phenylobacterium zucineum (strain HLK1)).